A 156-amino-acid chain; its full sequence is Ribosomal RNA large subunit methyltransferase H (156 aa).

Residues leucine 73, glycine 104, and 123-128 contribute to the S-adenosyl-L-methionine site; that span reads IGPLTL.

This sequence belongs to the RNA methyltransferase RlmH family. Homodimer.

The protein localises to the cytoplasm. It catalyses the reaction pseudouridine(1915) in 23S rRNA + S-adenosyl-L-methionine = N(3)-methylpseudouridine(1915) in 23S rRNA + S-adenosyl-L-homocysteine + H(+). Its function is as follows. Specifically methylates the pseudouridine at position 1915 (m3Psi1915) in 23S rRNA. The polypeptide is Ribosomal RNA large subunit methyltransferase H (Xanthomonas oryzae pv. oryzae (strain MAFF 311018)).